The following is a 217-amino-acid chain: Chloramphenicol acetyltransferase (217 aa).

Catalysis depends on histidine 193, which acts as the Proton acceptor.

Belongs to the chloramphenicol acetyltransferase family. Homotrimer.

It catalyses the reaction chloramphenicol + acetyl-CoA = chloramphenicol 3-acetate + CoA. In terms of biological role, this enzyme is an effector of chloramphenicol resistance in bacteria. This is Chloramphenicol acetyltransferase (cat) from Proteus mirabilis.